The chain runs to 408 residues: NADH-quinone oxidoreductase subunit D (408 aa).

Belongs to the complex I 49 kDa subunit family. As to quaternary structure, NDH-1 is composed of 14 different subunits. Subunits NuoB, C, D, E, F, and G constitute the peripheral sector of the complex.

Its subcellular location is the cell inner membrane. The catalysed reaction is a quinone + NADH + 5 H(+)(in) = a quinol + NAD(+) + 4 H(+)(out). Functionally, NDH-1 shuttles electrons from NADH, via FMN and iron-sulfur (Fe-S) centers, to quinones in the respiratory chain. The immediate electron acceptor for the enzyme in this species is believed to be ubiquinone. Couples the redox reaction to proton translocation (for every two electrons transferred, four hydrogen ions are translocated across the cytoplasmic membrane), and thus conserves the redox energy in a proton gradient. The sequence is that of NADH-quinone oxidoreductase subunit D from Campylobacter jejuni subsp. jejuni serotype O:2 (strain ATCC 700819 / NCTC 11168).